The primary structure comprises 57 residues: Large ribosomal subunit protein bL33 (57 aa).

This sequence belongs to the bacterial ribosomal protein bL33 family.

In Shewanella denitrificans (strain OS217 / ATCC BAA-1090 / DSM 15013), this protein is Large ribosomal subunit protein bL33.